We begin with the raw amino-acid sequence, 439 residues long: Xylose isomerase (439 aa).

Residues histidine 101 and aspartate 104 contribute to the active site. Mg(2+)-binding residues include glutamate 232, glutamate 268, histidine 271, aspartate 296, aspartate 307, aspartate 309, and aspartate 339.

This sequence belongs to the xylose isomerase family. Homotetramer. Mg(2+) is required as a cofactor.

The protein resides in the cytoplasm. It catalyses the reaction alpha-D-xylose = alpha-D-xylulofuranose. The polypeptide is Xylose isomerase (Pseudoalteromonas atlantica (strain T6c / ATCC BAA-1087)).